The sequence spans 253 residues: Mediator of RNA polymerase II transcription subunit 19 (253 aa).

Disordered stretches follow at residues 18–49 (EQYSPKSSPRAGGAGGRSPVVARQDSSGTLKT) and 157–253 (GPLP…TQVF). Over residues 21-40 (SPKSSPRAGGAGGRSPVVAR) the composition is skewed to low complexity. Composition is skewed to basic residues over residues 165-183 (HLKSVPTRKHKNKHKKHKY) and 220-233 (RKKRKKEKKRKKQR).

This sequence belongs to the Mediator complex subunit 19 family. In terms of assembly, component of the Mediator complex.

The protein localises to the nucleus. Component of the Mediator complex, a coactivator involved in the regulated transcription of nearly all RNA polymerase II-dependent genes. Mediator functions as a bridge to convey information from gene-specific regulatory proteins to the basal RNA polymerase II transcription machinery. Mediator is recruited to promoters by direct interactions with regulatory proteins and serves as a scaffold for the assembly of a functional preinitiation complex with RNA polymerase II and the general transcription factors. This chain is Mediator of RNA polymerase II transcription subunit 19 (MED19), found in Aedes aegypti (Yellowfever mosquito).